The primary structure comprises 311 residues: Olfactory receptor 8H1 (311 aa).

The Extracellular segment spans residues 1–25; sequence MGRRNNTNVPDFILTGLSDSEEVQM. Asn5 carries an N-linked (GlcNAc...) asparagine glycan. Residues 26–46 form a helical membrane-spanning segment; the sequence is ALFILFLLIYLITMLGNVGMI. Residues 47-54 are Cytoplasmic-facing; the sequence is LIIRLDLQ. A helical membrane pass occupies residues 55–75; sequence LHTPMYFFLTHLSFIDLSYST. Topologically, residues 76 to 98 are extracellular; that stretch reads VITPKTLANLLTSNYISFMGCFA. The cysteines at positions 96 and 188 are disulfide-linked. A helical membrane pass occupies residues 99–119; sequence QMFFFVFLGAAECFLLSSMAY. Over 120 to 138 the chain is Cytoplasmic; sequence DRYVAICSPLRYPVIMSKR. A helical membrane pass occupies residues 139 to 159; it reads LCCALVTGPYVISFINSFVNV. Residues 160–196 are Extracellular-facing; the sequence is VWMSRLHFCDSNVVRHFFCDTSPILALSCMDTYDIEI. Residues 197–216 form a helical membrane-spanning segment; it reads MIHILAGSTLMVSLITISAS. At 217-236 the chain is on the cytoplasmic side; sequence YVSILSTILKINSTSGKQKA. Residues 237-257 traverse the membrane as a helical segment; that stretch reads LSTCASHLLGVTIFYGTMIFT. Residues 258 to 270 are Extracellular-facing; it reads YLKPRKSYSLGRD. Residues 271–291 form a helical membrane-spanning segment; sequence QVASVFYTIVIPMLNPLIYSL. The Cytoplasmic portion of the chain corresponds to 292 to 311; it reads RNKEVKNALIRVMQRRQDSR.

The protein belongs to the G-protein coupled receptor 1 family.

It is found in the cell membrane. Functionally, odorant receptor. This Homo sapiens (Human) protein is Olfactory receptor 8H1 (OR8H1).